A 32-amino-acid chain; its full sequence is Fibrinolytic enzyme (32 aa).

In terms of processing, the N-terminus is blocked.

Inhibited by phenylmethanesulfonyl fluoride (PMSF). Not inhibited by EDTA, EGTA, beta-mercaptoethanol, indoacetamide, benzamidine, aprotinin, pepstatin A and trypsin inhibitor. Its function is as follows. Plasmin-like serine protease. Has fibrinolytic and fibrinogenolytic but not plasminogenolytic activity. Cleaves after Arg and Lys residues. The protein is Fibrinolytic enzyme of Hediste japonica (Polychaete worm).